The chain runs to 140 residues: ATP synthase epsilon chain (140 aa).

This sequence belongs to the ATPase epsilon chain family. In terms of assembly, F-type ATPases have 2 components, CF(1) - the catalytic core - and CF(0) - the membrane proton channel. CF(1) has five subunits: alpha(3), beta(3), gamma(1), delta(1), epsilon(1). CF(0) has three main subunits: a, b and c.

The protein localises to the cell inner membrane. Its function is as follows. Produces ATP from ADP in the presence of a proton gradient across the membrane. The polypeptide is ATP synthase epsilon chain (Xanthomonas campestris pv. campestris (strain 8004)).